The chain runs to 106 residues: Small ribosomal subunit protein uS10 (106 aa).

It belongs to the universal ribosomal protein uS10 family. In terms of assembly, part of the 30S ribosomal subunit.

In terms of biological role, involved in the binding of tRNA to the ribosomes. The protein is Small ribosomal subunit protein uS10 of Prochlorococcus marinus (strain MIT 9312).